The chain runs to 114 residues: Ig heavy chain V-A2 region BS-1 (114 aa).

Gln-1 is subject to Pyrrolidone carboxylic acid. The region spanning 1-107 (QSVKESEGGL…YLGLMDVWGP (107 aa)) is the Ig-like domain.

In Oryctolagus cuniculus (Rabbit), this protein is Ig heavy chain V-A2 region BS-1.